Here is a 393-residue protein sequence, read N- to C-terminus: Aspartate aminotransferase (393 aa).

Positions 38, 124, and 174 each coordinate L-aspartate. The residue at position 237 (K237) is an N6-(pyridoxal phosphate)lysine.

The protein belongs to the class-I pyridoxal-phosphate-dependent aminotransferase family. Homodimer. Pyridoxal 5'-phosphate serves as cofactor.

It is found in the cytoplasm. The catalysed reaction is L-aspartate + 2-oxoglutarate = oxaloacetate + L-glutamate. This Bacillus subtilis (strain 168) protein is Aspartate aminotransferase (aspB).